The following is a 494-amino-acid chain: Psoralen synthase (494 aa).

The chain crosses the membrane as a helical span at residues Tyr-12–Leu-29. Residue Cys-436 coordinates heme.

It belongs to the cytochrome P450 family.

It localises to the endoplasmic reticulum membrane. The protein localises to the microsome membrane. The catalysed reaction is (7S)-marmesin + reduced [NADPH--hemoprotein reductase] + O2 = psoralen + acetone + oxidized [NADPH--hemoprotein reductase] + 2 H2O + H(+). Inhibited by columbianetin. Functionally, involved in linear furanocumarin (psoralen) biosynthesis. Converts marmesin to psoralen. The polypeptide is Psoralen synthase (CYP71AJ1) (Ammi majus (Bishop's weed)).